The following is a 236-amino-acid chain: MTRKDFFNVLTRYFPWVDEQTFMSFEKYKTIIQKYNQIFNLTRLDSDDKIYQNFFLDSLAPYKELDFFTQNTNLKLIDIGSGSGIPGVVLKIIFKNLNLTLLEANQKRCEFLKILTQELGLNDVLIWNMRAEDLTQSMRESFDIATSRAVASLDKILEISAAFVKVNGYLIQPKSIKFYEEELKAKNIIKTLYLERIALKDFWENDYHHLVGVYLKKQITPLQFPRPWNLILKKPL.

Residues G80, 131–132, and R148 each bind S-adenosyl-L-methionine; that span reads AE.

It belongs to the methyltransferase superfamily. RNA methyltransferase RsmG family.

It is found in the cytoplasm. In terms of biological role, specifically methylates the N7 position of a guanine in 16S rRNA. The chain is Ribosomal RNA small subunit methyltransferase G from Ureaplasma parvum serovar 3 (strain ATCC 27815 / 27 / NCTC 11736).